The primary structure comprises 492 residues: Fumarate hydratase 1, mitochondrial (492 aa).

The transit peptide at 1-28 directs the protein to the mitochondrion; sequence MSIYVASRRLSGGTTVTALRYATSLRSY. Residues 127–129, 157–160, 167–169, and T215 contribute to the substrate site; these read SGT, HPND, and SSN. The active-site Proton donor/acceptor is H216. The active site involves S346. Residues S347 and 352 to 354 each bind substrate; that span reads KVN.

The protein belongs to the class-II fumarase/aspartase family. Fumarase subfamily. As to quaternary structure, homotetramer.

Its subcellular location is the mitochondrion. The enzyme catalyses (S)-malate = fumarate + H2O. The protein operates within carbohydrate metabolism; tricarboxylic acid cycle; (S)-malate from fumarate: step 1/1. Its activity is regulated as follows. Fumarate hydratase activity (fumarate to L-malate) is strongly inhibited by phosphoenolpyruvate, citrate, oxaloacetate, ATP and ADP. Malate dehydratase activity (malate to fumarate) is activated by oxaloacetate, pyruvate, Asn and Gln. Malate dehydratase activity (malate to fumarate) is inhibited by citrate, succinate, ADP, ATP, glucose-6P and phosphoenolpyruvate. Its function is as follows. Catalyzes the reversible stereospecific interconversion of fumarate to L-malate. Catalyzes the hydration of fumarate to L-malate in the tricarboxylic acid (TCA) cycle to facilitate a transition step in the production of energy in the form of NADH. This is Fumarate hydratase 1, mitochondrial from Arabidopsis thaliana (Mouse-ear cress).